The primary structure comprises 180 residues: MKILGIDPGLRTTGFGVIEKQGNKLSYIASGTIKTPDADLPQRLKTILVSVAEVIATYKPDCAAIEKVFVNVNPQSTLLLGQARGAAICALVGADLFVAEYTALQVKQAVVGQGKAQKAQVQDMVQRLLKLSGLPGTDAADALGVAICHAHSGEALSMLGALAPELAKKGLRVRGGRLVG.

Residues aspartate 7, glutamate 66, and aspartate 138 contribute to the active site. Mg(2+)-binding residues include aspartate 7, glutamate 66, and aspartate 138.

This sequence belongs to the RuvC family. Homodimer which binds Holliday junction (HJ) DNA. The HJ becomes 2-fold symmetrical on binding to RuvC with unstacked arms; it has a different conformation from HJ DNA in complex with RuvA. In the full resolvosome a probable DNA-RuvA(4)-RuvB(12)-RuvC(2) complex forms which resolves the HJ. Mg(2+) is required as a cofactor.

The protein resides in the cytoplasm. It catalyses the reaction Endonucleolytic cleavage at a junction such as a reciprocal single-stranded crossover between two homologous DNA duplexes (Holliday junction).. Functionally, the RuvA-RuvB-RuvC complex processes Holliday junction (HJ) DNA during genetic recombination and DNA repair. Endonuclease that resolves HJ intermediates. Cleaves cruciform DNA by making single-stranded nicks across the HJ at symmetrical positions within the homologous arms, yielding a 5'-phosphate and a 3'-hydroxyl group; requires a central core of homology in the junction. The consensus cleavage sequence is 5'-(A/T)TT(C/G)-3'. Cleavage occurs on the 3'-side of the TT dinucleotide at the point of strand exchange. HJ branch migration catalyzed by RuvA-RuvB allows RuvC to scan DNA until it finds its consensus sequence, where it cleaves and resolves the cruciform DNA. This chain is Crossover junction endodeoxyribonuclease RuvC, found in Herminiimonas arsenicoxydans.